The primary structure comprises 724 residues: Probable metal-nicotianamine transporter YSL8 (724 aa).

The interval 1 to 58 is disordered; sequence MRKGGLTPDRDRQIEEHELQETGISPDIERLKRNINATPYQREEEEEDREEQEESVEG. Residues 8–20 show a composition bias toward basic and acidic residues; sequence PDRDRQIEEHELQ. Ser25 carries the phosphoserine modification. The segment covering 43 to 56 has biased composition (acidic residues); that stretch reads EEEEEDREEQEESV. 7 helical membrane passes run 72–92, 96–116, 144–164, 184–204, 245–265, 304–324, and 349–369; these read LTIR…FIVM, LTTG…FFFV, CVVA…LFAM, LGWM…SVVP, VLGK…FFTA, IINI…WPLI, and VFIA…KVLI. Positions 386–407 are disordered; it reads RSSLAHKEDPPASPASPLTPRI. Transmembrane regions (helical) follow at residues 423 to 443, 455 to 475, 478 to 497, 501 to 520, 541 to 561, 603 to 623, 641 to 661, and 679 to 699; these read IPSW…TAIL, IIVI…GAGL, WSLA…AWAG, GGLL…VSTA, FVSQ…VFWL, LMLC…KDCL, FFLG…LFVW, and GLIC…IAGV.

It belongs to the YSL (TC 2.A.67.2) family.

The protein localises to the membrane. In terms of biological role, may be involved in the transport of nicotianamine-chelated metals. This is Probable metal-nicotianamine transporter YSL8 (YSL8) from Arabidopsis thaliana (Mouse-ear cress).